The chain runs to 294 residues: Probable 2-(5''-triphosphoribosyl)-3'-dephosphocoenzyme-A synthase (294 aa).

This sequence belongs to the CitG/MdcB family.

The enzyme catalyses 3'-dephospho-CoA + ATP = 2'-(5''-triphospho-alpha-D-ribosyl)-3'-dephospho-CoA + adenine. This is Probable 2-(5''-triphosphoribosyl)-3'-dephosphocoenzyme-A synthase from Streptococcus pyogenes serotype M2 (strain MGAS10270).